A 116-amino-acid chain; its full sequence is Diuretic hormone class 2 (116 aa).

Positions 1-25 (MTNRCACFALAFLLFCLLAISSIEA) are cleaved as a signal peptide. Residues 26 to 75 (APMPSQSNGGYGGAGYNELEEVPDDLLMELMTRFGRTIIRARNDLENSKR) constitute a propeptide that is removed on maturation. P106 carries the post-translational modification Proline amide. Positions 112 to 116 (SETDV) are excised as a propeptide.

It is found in the secreted. Regulation of fluid secretion. Stimulates Malpighian tubules fluid secretion by activating the apical membrane V-ATPase via cyclic AMP of principal cells in the main secretory segment. This is Diuretic hormone class 2 (Dh31) from Drosophila melanogaster (Fruit fly).